A 469-amino-acid polypeptide reads, in one-letter code: Ribulose bisphosphate carboxylase large chain (469 aa).

An N6,N6,N6-trimethyllysine modification is found at Lys-5. Substrate contacts are provided by Asn-114 and Thr-164. Lys-166 functions as the Proton acceptor in the catalytic mechanism. Lys-168 is a binding site for substrate. 3 residues coordinate Mg(2+): Lys-192, Asp-194, and Glu-195. Lys-192 carries the N6-carboxylysine modification. The Proton acceptor role is filled by His-285. Residues Arg-286, His-318, and Ser-370 each contribute to the substrate site.

Belongs to the RuBisCO large chain family. Type I subfamily. Heterohexadecamer of 8 large chains and 8 small chains; disulfide-linked. The disulfide link is formed within the large subunit homodimers. Requires Mg(2+) as cofactor. Post-translationally, the disulfide bond which can form in the large chain dimeric partners within the hexadecamer appears to be associated with oxidative stress and protein turnover.

It is found in the plastid. It localises to the chloroplast. It carries out the reaction 2 (2R)-3-phosphoglycerate + 2 H(+) = D-ribulose 1,5-bisphosphate + CO2 + H2O. It catalyses the reaction D-ribulose 1,5-bisphosphate + O2 = 2-phosphoglycolate + (2R)-3-phosphoglycerate + 2 H(+). In terms of biological role, ruBisCO catalyzes two reactions: the carboxylation of D-ribulose 1,5-bisphosphate, the primary event in carbon dioxide fixation, as well as the oxidative fragmentation of the pentose substrate in the photorespiration process. Both reactions occur simultaneously and in competition at the same active site. The chain is Ribulose bisphosphate carboxylase large chain from Antirhea lucida (Palo iloron).